Here is a 221-residue protein sequence, read N- to C-terminus: Large ribosomal subunit protein uL4 (221 aa).

Positions 44-102 (AARQGTHKVKRRGEVRGGGKKPYRQKGTGRARQGSTRAPQFAGGGVVHGPTPRDYSQRT) are disordered. Residues 61–72 (GGKKPYRQKGTG) show a composition bias toward basic residues.

The protein belongs to the universal ribosomal protein uL4 family. Part of the 50S ribosomal subunit.

Functionally, one of the primary rRNA binding proteins, this protein initially binds near the 5'-end of the 23S rRNA. It is important during the early stages of 50S assembly. It makes multiple contacts with different domains of the 23S rRNA in the assembled 50S subunit and ribosome. Forms part of the polypeptide exit tunnel. The sequence is that of Large ribosomal subunit protein uL4 from Streptomyces avermitilis (strain ATCC 31267 / DSM 46492 / JCM 5070 / NBRC 14893 / NCIMB 12804 / NRRL 8165 / MA-4680).